The sequence spans 240 residues: U1 small nuclear ribonucleoprotein C (240 aa).

A Matrin-type zinc finger spans residues Y4–E36. 2 disordered regions span residues G86 to H122 and I175 to A240. Composition is skewed to basic and acidic residues over residues D178–I194 and D203–H219. Over residues T226–A240 the composition is skewed to polar residues.

Belongs to the U1 small nuclear ribonucleoprotein C family. As to quaternary structure, U1 snRNP is composed of the 7 core Sm proteins B/B', D1, D2, D3, E, F and G that assemble in a heptameric protein ring on the Sm site of the small nuclear RNA to form the core snRNP, and at least 3 U1 snRNP-specific proteins U1-70K, U1-A and U1-C. U1-C interacts with U1 snRNA and the 5' splice-site region of the pre-mRNA.

Its subcellular location is the nucleus. In terms of biological role, component of the spliceosomal U1 snRNP, which is essential for recognition of the pre-mRNA 5' splice-site and the subsequent assembly of the spliceosome. U1-C is directly involved in initial 5' splice-site recognition for both constitutive and regulated alternative splicing. The interaction with the 5' splice-site seems to precede base-pairing between the pre-mRNA and the U1 snRNA. Stimulates commitment or early (E) complex formation by stabilizing the base pairing of the 5' end of the U1 snRNA and the 5' splice-site region. In Plasmodium vivax (strain Salvador I), this protein is U1 small nuclear ribonucleoprotein C.